We begin with the raw amino-acid sequence, 237 residues long: Maternal B9.10 protein (237 aa).

The protein belongs to the BTG family.

This Xenopus laevis (African clawed frog) protein is Maternal B9.10 protein.